The following is a 199-amino-acid chain: NADH-quinone oxidoreductase subunit C (199 aa).

This sequence belongs to the complex I 30 kDa subunit family. NDH-1 is composed of 14 different subunits. Subunits NuoB, C, D, E, F, and G constitute the peripheral sector of the complex.

The protein localises to the cell inner membrane. The catalysed reaction is a quinone + NADH + 5 H(+)(in) = a quinol + NAD(+) + 4 H(+)(out). Its function is as follows. NDH-1 shuttles electrons from NADH, via FMN and iron-sulfur (Fe-S) centers, to quinones in the respiratory chain. The immediate electron acceptor for the enzyme in this species is believed to be ubiquinone. Couples the redox reaction to proton translocation (for every two electrons transferred, four hydrogen ions are translocated across the cytoplasmic membrane), and thus conserves the redox energy in a proton gradient. The chain is NADH-quinone oxidoreductase subunit C from Cupriavidus metallidurans (strain ATCC 43123 / DSM 2839 / NBRC 102507 / CH34) (Ralstonia metallidurans).